We begin with the raw amino-acid sequence, 100 residues long: uncharacterized protein (100 aa).

It localises to the cytoplasm. The protein localises to the endoplasmic reticulum. This is an uncharacterized protein from Schizosaccharomyces pombe (strain 972 / ATCC 24843) (Fission yeast).